A 404-amino-acid chain; its full sequence is Cysteine desulfurase IscS (404 aa).

Residues 75 to 76, Asn155, Gln183, and 203 to 205 contribute to the pyridoxal 5'-phosphate site; these read AT and SGH. Lys206 is subject to N6-(pyridoxal phosphate)lysine. A pyridoxal 5'-phosphate-binding site is contributed by Thr243. The Cysteine persulfide intermediate role is filled by Cys328. Cys328 provides a ligand contact to [2Fe-2S] cluster.

It belongs to the class-V pyridoxal-phosphate-dependent aminotransferase family. NifS/IscS subfamily. Homodimer. Forms a heterotetramer with IscU, interacts with other sulfur acceptors. Requires pyridoxal 5'-phosphate as cofactor.

The protein localises to the cytoplasm. The enzyme catalyses (sulfur carrier)-H + L-cysteine = (sulfur carrier)-SH + L-alanine. The protein operates within cofactor biosynthesis; iron-sulfur cluster biosynthesis. Its function is as follows. Master enzyme that delivers sulfur to a number of partners involved in Fe-S cluster assembly, tRNA modification or cofactor biosynthesis. Catalyzes the removal of elemental sulfur and selenium atoms from cysteine and selenocysteine to produce alanine. Functions as a sulfur delivery protein for Fe-S cluster synthesis onto IscU, an Fe-S scaffold assembly protein, as well as other S acceptor proteins. Also functions as a selenium delivery protein in the pathway for the biosynthesis of selenophosphate. In Salmonella gallinarum (strain 287/91 / NCTC 13346), this protein is Cysteine desulfurase IscS.